The chain runs to 160 residues: ATP synthase subunit delta, mitochondrial (160 aa).

A mitochondrion-targeting transit peptide spans 1–22 (MLRSIIGKSASRSLNFVAKRSY).

It belongs to the ATPase epsilon chain family. In terms of assembly, F-type ATPases have 2 components, CF(1) - the catalytic core - and CF(0) - the membrane proton channel. CF(1) has five subunits: alpha(3), beta(3), gamma(1), delta(1), epsilon(1). CF(0) has three main subunits: a, b and c.

The protein resides in the mitochondrion. Its subcellular location is the mitochondrion inner membrane. In terms of biological role, mitochondrial membrane ATP synthase (F(1)F(0) ATP synthase or Complex V) produces ATP from ADP in the presence of a proton gradient across the membrane which is generated by electron transport complexes of the respiratory chain. F-type ATPases consist of two structural domains, F(1) - containing the extramembraneous catalytic core, and F(0) - containing the membrane proton channel, linked together by a central stalk and a peripheral stalk. During catalysis, ATP turnover in the catalytic domain of F(1) is coupled via a rotary mechanism of the central stalk subunits to proton translocation. Part of the complex F(1) domain and of the central stalk which is part of the complex rotary element. Rotation of the central stalk against the surrounding alpha(3)beta(3) subunits leads to hydrolysis of ATP in three separate catalytic sites on the beta subunits. The polypeptide is ATP synthase subunit delta, mitochondrial (ATP16) (Saccharomyces cerevisiae (strain ATCC 204508 / S288c) (Baker's yeast)).